Here is a 152-residue protein sequence, read N- to C-terminus: D-aminoacyl-tRNA deacylase (152 aa).

The Gly-cisPro motif, important for rejection of L-amino acids motif lies at 142 to 143; that stretch reads GP.

Belongs to the DTD family. Homodimer.

The protein localises to the cytoplasm. The enzyme catalyses glycyl-tRNA(Ala) + H2O = tRNA(Ala) + glycine + H(+). It catalyses the reaction a D-aminoacyl-tRNA + H2O = a tRNA + a D-alpha-amino acid + H(+). Functionally, an aminoacyl-tRNA editing enzyme that deacylates mischarged D-aminoacyl-tRNAs. Also deacylates mischarged glycyl-tRNA(Ala), protecting cells against glycine mischarging by AlaRS. Acts via tRNA-based rather than protein-based catalysis; rejects L-amino acids rather than detecting D-amino acids in the active site. By recycling D-aminoacyl-tRNA to D-amino acids and free tRNA molecules, this enzyme counteracts the toxicity associated with the formation of D-aminoacyl-tRNA entities in vivo and helps enforce protein L-homochirality. This chain is D-aminoacyl-tRNA deacylase, found in Paraburkholderia phymatum (strain DSM 17167 / CIP 108236 / LMG 21445 / STM815) (Burkholderia phymatum).